The primary structure comprises 450 residues: Tol-Pal system protein TolB (450 aa).

An N-terminal signal peptide occupies residues 1-37 (MIERNGLQRMPFRLNRRHMISGMASAAVLLGSRQALG).

The protein belongs to the TolB family. The Tol-Pal system is composed of five core proteins: the inner membrane proteins TolA, TolQ and TolR, the periplasmic protein TolB and the outer membrane protein Pal. They form a network linking the inner and outer membranes and the peptidoglycan layer.

Its subcellular location is the periplasm. Its function is as follows. Part of the Tol-Pal system, which plays a role in outer membrane invagination during cell division and is important for maintaining outer membrane integrity. In Nitrobacter winogradskyi (strain ATCC 25391 / DSM 10237 / CIP 104748 / NCIMB 11846 / Nb-255), this protein is Tol-Pal system protein TolB.